Reading from the N-terminus, the 1092-residue chain is DNA polymerase II large subunit (1092 aa).

This sequence belongs to the archaeal DNA polymerase II family. In terms of assembly, heterodimer of a large subunit and a small subunit.

It carries out the reaction DNA(n) + a 2'-deoxyribonucleoside 5'-triphosphate = DNA(n+1) + diphosphate. The catalysed reaction is Exonucleolytic cleavage in the 3'- to 5'-direction to yield nucleoside 5'-phosphates.. In terms of biological role, possesses two activities: a DNA synthesis (polymerase) and an exonucleolytic activity that degrades single-stranded DNA in the 3'- to 5'-direction. Has a template-primer preference which is characteristic of a replicative DNA polymerase. This chain is DNA polymerase II large subunit (polC), found in Methanothermobacter thermautotrophicus (strain ATCC 29096 / DSM 1053 / JCM 10044 / NBRC 100330 / Delta H) (Methanobacterium thermoautotrophicum).